A 361-amino-acid chain; its full sequence is Tyrosine--tRNA ligase (361 aa).

Residues Y36, Y162, Q166, D169, and Q184 each contribute to the L-tyrosine site. The 'KMSKS' region motif lies at 235–239 (KMSKS). K238 is a binding site for ATP.

This sequence belongs to the class-I aminoacyl-tRNA synthetase family. TyrS type 4 subfamily. Homodimer.

Its subcellular location is the cytoplasm. The enzyme catalyses tRNA(Tyr) + L-tyrosine + ATP = L-tyrosyl-tRNA(Tyr) + AMP + diphosphate + H(+). Functionally, catalyzes the attachment of tyrosine to tRNA(Tyr) in a two-step reaction: tyrosine is first activated by ATP to form Tyr-AMP and then transferred to the acceptor end of tRNA(Tyr). This chain is Tyrosine--tRNA ligase, found in Sulfolobus acidocaldarius (strain ATCC 33909 / DSM 639 / JCM 8929 / NBRC 15157 / NCIMB 11770).